The primary structure comprises 499 residues: Serine/threonine-protein kinase SSN3 (499 aa).

A disordered region spans residues methionine 1–alanine 21. The Protein kinase domain maps to tyrosine 61–phenylalanine 442. ATP is bound by residues isoleucine 67–valine 75 and lysine 91. Aspartate 193 serves as the catalytic Proton acceptor. Disordered regions lie at residues serine 332–alanine 376 and arginine 463–glutamate 499. Over residues serine 365–alanine 376 the composition is skewed to low complexity. The segment covering arginine 463–isoleucine 472 has biased composition (basic and acidic residues).

The protein belongs to the protein kinase superfamily. CMGC Ser/Thr protein kinase family. CDC2/CDKX subfamily. Component of the SRB8-11 complex, a regulatory module of the Mediator complex. The cofactor is Mg(2+).

The protein resides in the nucleus. It catalyses the reaction L-seryl-[protein] + ATP = O-phospho-L-seryl-[protein] + ADP + H(+). It carries out the reaction L-threonyl-[protein] + ATP = O-phospho-L-threonyl-[protein] + ADP + H(+). The catalysed reaction is [DNA-directed RNA polymerase] + ATP = phospho-[DNA-directed RNA polymerase] + ADP + H(+). Its function is as follows. Component of the SRB8-11 complex. The SRB8-11 complex is a regulatory module of the Mediator complex which is itself involved in regulation of basal and activated RNA polymerase II-dependent transcription. The SRB8-11 complex may be involved in the transcriptional repression of a subset of genes regulated by Mediator. It may inhibit the association of the Mediator complex with RNA polymerase II to form the holoenzyme complex. The SRB8-11 complex phosphorylates the C-terminal domain (CTD) of the largest subunit of RNA polymerase II. The polypeptide is Serine/threonine-protein kinase SSN3 (SSN3) (Pyricularia oryzae (strain 70-15 / ATCC MYA-4617 / FGSC 8958) (Rice blast fungus)).